The sequence spans 296 residues: Chelated iron transport system membrane protein YfeB (296 aa).

Residues 11–246 form the ABC transporter domain; the sequence is LVVDNVTVTY…NLEMTFGGVL (236 aa). 44–51 contributes to the ATP binding site; that stretch reads GVNGSGKS. Positions 276 to 296 are disordered; it reads VFYGHTKNDPPAQSQSKEQNS. Residues 286 to 296 are compositionally biased toward polar residues; it reads PAQSQSKEQNS.

It belongs to the ABC transporter superfamily.

The protein resides in the cell inner membrane. Functionally, part of an ATP-driven transport system YfeABCD for chelated iron. This Yersinia pestis protein is Chelated iron transport system membrane protein YfeB (yfeB).